The following is a 173-amino-acid chain: Putative metal-dependent hydrolase BC_2708 (173 aa).

The Zn(2+) site is built by histidine 65, histidine 156, and histidine 160.

Belongs to the metal hydrolase YfiT family. In terms of assembly, homodimer. Requires Zn(2+) as cofactor.

Its subcellular location is the cytoplasm. Its function is as follows. Possible metal-dependent hydrolase. This Bacillus cereus (strain ATCC 14579 / DSM 31 / CCUG 7414 / JCM 2152 / NBRC 15305 / NCIMB 9373 / NCTC 2599 / NRRL B-3711) protein is Putative metal-dependent hydrolase BC_2708.